Consider the following 468-residue polypeptide: ATP synthase subunit beta (468 aa).

An ATP-binding site is contributed by 155–162; the sequence is GGAGVGKT.

The protein belongs to the ATPase alpha/beta chains family. In terms of assembly, F-type ATPases have 2 components, CF(1) - the catalytic core - and CF(0) - the membrane proton channel. CF(1) has five subunits: alpha(3), beta(3), gamma(1), delta(1), epsilon(1). CF(0) has three main subunits: a(1), b(2) and c(9-12). The alpha and beta chains form an alternating ring which encloses part of the gamma chain. CF(1) is attached to CF(0) by a central stalk formed by the gamma and epsilon chains, while a peripheral stalk is formed by the delta and b chains.

The protein resides in the cell membrane. The enzyme catalyses ATP + H2O + 4 H(+)(in) = ADP + phosphate + 5 H(+)(out). Its function is as follows. Produces ATP from ADP in the presence of a proton gradient across the membrane. The catalytic sites are hosted primarily by the beta subunits. The sequence is that of ATP synthase subunit beta from Streptococcus equi subsp. zooepidemicus (strain H70).